The primary structure comprises 487 residues: Inosine-5'-monophosphate dehydrogenase (487 aa).

2 CBS domains span residues 93–152 and 153–214; these read VVTE…VTAV and MTPK…CKDE. Residues Asp248, 248 to 250, and 298 to 300 each bind NAD(+); these read DSS and GIG. Residues Gly300 and Gly302 each contribute to the K(+) site. An IMP-binding site is contributed by Ser303. Cys305 contacts K(+). The active-site Thioimidate intermediate is Cys305. Residues 338-340, 361-362, and 385-389 each bind IMP; these read DGG, GS, and YRGMG. Arg401 serves as the catalytic Proton acceptor. Position 415 (Glu415) interacts with IMP. Residues Glu469, Ser470, and His471 each contribute to the K(+) site.

Belongs to the IMPDH/GMPR family. In terms of assembly, homotetramer. Requires K(+) as cofactor.

The catalysed reaction is IMP + NAD(+) + H2O = XMP + NADH + H(+). The protein operates within purine metabolism; XMP biosynthesis via de novo pathway; XMP from IMP: step 1/1. Its activity is regulated as follows. Mycophenolic acid (MPA) is a non-competitive inhibitor that prevents formation of the closed enzyme conformation by binding to the same site as the amobile flap. In contrast, mizoribine monophosphate (MZP) is a competitive inhibitor that induces the closed conformation. MPA is a potent inhibitor of mammalian IMPDHs but a poor inhibitor of the bacterial enzymes. MZP is a more potent inhibitor of bacterial IMPDH. Its function is as follows. Catalyzes the conversion of inosine 5'-phosphate (IMP) to xanthosine 5'-phosphate (XMP), the first committed and rate-limiting step in the de novo synthesis of guanine nucleotides, and therefore plays an important role in the regulation of cell growth. The protein is Inosine-5'-monophosphate dehydrogenase of Yersinia pestis.